The sequence spans 725 residues: Glutamine-dependent NAD(+) synthetase (725 aa).

The CN hydrolase domain occupies 5 to 275; that stretch reads VTVATCALNQ…VEVLTATLDL (271 aa). The active-site Proton acceptor; for glutaminase activity is E45. The For glutaminase activity role is filled by K114. C175 functions as the Nucleophile; for glutaminase activity in the catalytic mechanism. The ligase stretch occupies residues 325–706; it reads YHRPEEEISL…KASQTREEQV (382 aa). 355–362 contacts ATP; it reads PLSGGVDS. The active site involves S357.

This sequence in the C-terminal section; belongs to the NAD synthetase family. Homohexamer. As to expression, highly expressed in small intestine, kidney, liver and testis. Weakly expressed in skeletal muscle, spleen, lung, heart and brain.

It carries out the reaction deamido-NAD(+) + L-glutamine + ATP + H2O = L-glutamate + AMP + diphosphate + NAD(+) + H(+). It participates in cofactor biosynthesis; NAD(+) biosynthesis; NAD(+) from deamido-NAD(+) (L-Gln route): step 1/1. Functionally, catalyzes the final step of the nicotinamide adenine dinucleotide (NAD) de novo synthesis pathway, the ATP-dependent amidation of deamido-NAD using L-glutamine as a nitrogen source. The sequence is that of Glutamine-dependent NAD(+) synthetase (Nadsyn1) from Mus musculus (Mouse).